Here is a 39-residue protein sequence, read N- to C-terminus: Photosystem II reaction center protein L (39 aa).

The helical transmembrane segment at 18 to 38 threads the bilayer; the sequence is SLYLGLLSVFVLGILFSSYFF.

It belongs to the PsbL family. In terms of assembly, PSII is composed of 1 copy each of membrane proteins PsbA, PsbB, PsbC, PsbD, PsbE, PsbF, PsbH, PsbI, PsbJ, PsbK, PsbL, PsbM, PsbT, PsbX, PsbY, Psb30/Ycf12, peripheral proteins PsbO, CyanoQ (PsbQ), PsbU, PsbV and a large number of cofactors. It forms dimeric complexes.

The protein resides in the cellular thylakoid membrane. Functionally, one of the components of the core complex of photosystem II (PSII). PSII is a light-driven water:plastoquinone oxidoreductase that uses light energy to abstract electrons from H(2)O, generating O(2) and a proton gradient subsequently used for ATP formation. It consists of a core antenna complex that captures photons, and an electron transfer chain that converts photonic excitation into a charge separation. This subunit is found at the monomer-monomer interface and is required for correct PSII assembly and/or dimerization. The polypeptide is Photosystem II reaction center protein L (Prochlorococcus marinus (strain MIT 9301)).